Consider the following 717-residue polypeptide: Myc proto-oncogene protein (717 aa).

Residue Thr217 is modified to Phosphothreonine. At Ser220 the chain carries Phosphoserine. 3 disordered regions span residues 288-376 (LNQH…KNNS), 462-535 (TPAS…LKDP), and 555-584 (HSSM…SGQD). Residues 298 to 311 (QQQLNQQQLDEQQQ) are compositionally biased toward low complexity. Positions 351–360 (KSGSNASITT) are enriched in polar residues. The segment covering 361–376 (NNNNSNNKNNKLKNNS) has biased composition (low complexity). Positions 462-488 (TPASSSPVKSVANSRYPSPSSTPYQNC) are enriched in polar residues. Low complexity predominate over residues 489–523 (SSASPSYSPLSVDSSNVSSSSSSSSSQSSFTTSSS). The basic motif stretch occupies residues 625-638 (EKRNQHNDMERQRR). The 53-residue stretch at 625-677 (EKRNQHNDMERQRRIGLKNLFEALKKQIPTIRDKERAPKVNILREAAKLCIQL) folds into the bHLH domain. Residues 639–677 (IGLKNLFEALKKQIPTIRDKERAPKVNILREAAKLCIQL) form a helix-loop-helix motif region.

It belongs to the Myc transcription factor family. In terms of assembly, efficient DNA binding requires dimerization with another bHLH protein. Binds DNA as a heterodimer with Max. Interacts with ago. Interacts with lid. Part of a complex containing lid, Myc and ash2. Component of a complex with pont and rept. Interacts with puf. Interacts with wh/wuho; the interaction may be mediated by mei-P26 and may be involved in the regulation of ribosome biogenesis. In terms of processing, probably targeted for ubiquitination by the SFC ubiquitin ligase complex member ago, leading to its proteasomal degradation. Low levels detected throughout embryo before cellular blastoderm formation, particularly concentrated in pole plasm. Zygotic expression detected during cellular blastoderm stage in endodermal anlagen of anterior and posterior midgut at both poles. After gastrulation, expression detected in invaginating ventral furrow of mesoderm. Continued expression in anterior and posterior midgut and mesoderm during germband extension. During late germ-band retraction, expression remains detectable in fusing midgut and presumed developing somatic musculature.

It is found in the nucleus. Its subcellular location is the nucleolus. The protein resides in the cytoplasm. In terms of biological role, participates in the regulation of gene transcription. Binds DNA in a non-specific manner, yet also specifically recognizes the core sequence CAC[GA]TG. Seems to activate the transcription of growth-related genes; required for cellular proliferation and growth. Functions in the TORC2-mediated regulation of cell growth, acting downstream of the TORC2 complex. Inhibits the demethylase activity of Lid. Activates transcription of mbm. Has a role in ribosome biogenesis and endoreplication in fat body cells by activating the transcription of LTV1. Able to induce the SCF E3 ubiquitin-protein ligase member archipelago (ago) which functions in its degradation. It may therefore create a negative feedback loop with ago that is regulated by the ubiquitin hydrolase puf. In dopaminergic neurons, regulates dopamine levels by binding to the E-box (E1) of the dopamine decarboxylase Ddc promoter and thereby inhibiting its transcription. This regulation is required to suppress male-male courtship. Involved in the acs and insulin signaling mediated non-cell-autonomous induction of amino acid release into the hemolymph following the cytoplasmic purge response to intestinal bacterial infection; required for efficient recovery of enterocyte thickness. This Drosophila melanogaster (Fruit fly) protein is Myc proto-oncogene protein.